We begin with the raw amino-acid sequence, 880 residues long: DNA double-strand break repair Rad50 ATPase (880 aa).

ATP contacts are provided by residues Arg12, 32 to 38 (NGSGKSS), and Gln138. Coiled coils occupy residues 225–336 (GELE…VIKE) and 391–744 (GEVI…QALN). In terms of domain architecture, Zinc-hook spans 397-494 (LESLEKERTE…NLRKLEIKLR (98 aa)). The Zn(2+) site is built by Cys442 and Cys445. Residue 789–794 (FLSGGE) coordinates ATP.

Belongs to the SMC family. RAD50 subfamily. In terms of assembly, homodimer. Forms a heterotetramer composed of two Mre11 subunits and two Rad50 subunits. Requires Zn(2+) as cofactor.

Functionally, part of the Rad50/Mre11 complex, which is involved in the early steps of DNA double-strand break (DSB) repair. The complex may facilitate opening of the processed DNA ends to aid in the recruitment of HerA and NurA. Rad50 controls the balance between DNA end bridging and DNA resection via ATP-dependent structural rearrangements of the Rad50/Mre11 complex. The sequence is that of DNA double-strand break repair Rad50 ATPase from Pyrococcus abyssi (strain GE5 / Orsay).